The following is a 254-amino-acid chain: Phosphoribosylaminoimidazole-succinocarboxamide synthase (254 aa).

It belongs to the SAICAR synthetase family.

The enzyme catalyses 5-amino-1-(5-phospho-D-ribosyl)imidazole-4-carboxylate + L-aspartate + ATP = (2S)-2-[5-amino-1-(5-phospho-beta-D-ribosyl)imidazole-4-carboxamido]succinate + ADP + phosphate + 2 H(+). It functions in the pathway purine metabolism; IMP biosynthesis via de novo pathway; 5-amino-1-(5-phospho-D-ribosyl)imidazole-4-carboxamide from 5-amino-1-(5-phospho-D-ribosyl)imidazole-4-carboxylate: step 1/2. In Bartonella henselae (strain ATCC 49882 / DSM 28221 / CCUG 30454 / Houston 1) (Rochalimaea henselae), this protein is Phosphoribosylaminoimidazole-succinocarboxamide synthase.